A 266-amino-acid chain; its full sequence is Energy-coupling factor transporter transmembrane protein EcfT (266 aa).

Helical transmembrane passes span 32 to 52 (IIVVFLANNIWSYAILIAFTV), 71 to 91 (PLLWLIVFTVVLQLLFSPAGG), 107 to 127 (LINAGYIFVRFLLIIMMSTLL), 152 to 172 (VPVDTLAMMLSIALRFVPTLM), and 246 to 266 (DTVTWLLFLLGFVAILIFRHW).

It belongs to the energy-coupling factor EcfT family. In terms of assembly, forms a stable energy-coupling factor (ECF) transporter complex composed of 2 membrane-embedded substrate-binding proteins (S component), 2 ATP-binding proteins (A component) and 2 transmembrane proteins (T component). May be able to interact with more than 1 S component at a time.

The protein localises to the cell membrane. Transmembrane (T) component of an energy-coupling factor (ECF) ABC-transporter complex. Unlike classic ABC transporters this ECF transporter provides the energy necessary to transport a number of different substrates. This chain is Energy-coupling factor transporter transmembrane protein EcfT, found in Levilactobacillus brevis (strain ATCC 367 / BCRC 12310 / CIP 105137 / JCM 1170 / LMG 11437 / NCIMB 947 / NCTC 947) (Lactobacillus brevis).